The following is a 207-amino-acid chain: Small ribosomal subunit protein uS4 (207 aa).

Positions 31–53 (KAKFDSKPGQHGRTSGARTSDFG) are disordered. One can recognise an S4 RNA-binding domain in the interval 97-160 (SRLDNVVYRM…KKQNRIVEAL (64 aa)).

It belongs to the universal ribosomal protein uS4 family. In terms of assembly, part of the 30S ribosomal subunit. Contacts protein S5. The interaction surface between S4 and S5 is involved in control of translational fidelity.

One of the primary rRNA binding proteins, it binds directly to 16S rRNA where it nucleates assembly of the body of the 30S subunit. Its function is as follows. With S5 and S12 plays an important role in translational accuracy. This is Small ribosomal subunit protein uS4 from Albidiferax ferrireducens (strain ATCC BAA-621 / DSM 15236 / T118) (Rhodoferax ferrireducens).